The chain runs to 485 residues: Probable cobyric acid synthase (485 aa).

The region spanning glutamate 250 to isoleucine 435 is the GATase cobBQ-type domain. The Nucleophile role is filled by cysteine 328. Histidine 427 is a catalytic residue.

Belongs to the CobB/CobQ family. CobQ subfamily.

Its pathway is cofactor biosynthesis; adenosylcobalamin biosynthesis. Functionally, catalyzes amidations at positions B, D, E, and G on adenosylcobyrinic A,C-diamide. NH(2) groups are provided by glutamine, and one molecule of ATP is hydrogenolyzed for each amidation. The polypeptide is Probable cobyric acid synthase (Methanosarcina barkeri (strain Fusaro / DSM 804)).